The chain runs to 208 residues: Imidazole glycerol phosphate synthase subunit HisH (208 aa).

The region spanning 1–206 is the Glutamine amidotransferase type-1 domain; it reads MIVIIDYDTG…KEVTYSCKSS (206 aa). C79 functions as the Nucleophile in the catalytic mechanism. Residues H181 and E183 contribute to the active site.

As to quaternary structure, heterodimer of HisH and HisF.

Its subcellular location is the cytoplasm. The enzyme catalyses 5-[(5-phospho-1-deoxy-D-ribulos-1-ylimino)methylamino]-1-(5-phospho-beta-D-ribosyl)imidazole-4-carboxamide + L-glutamine = D-erythro-1-(imidazol-4-yl)glycerol 3-phosphate + 5-amino-1-(5-phospho-beta-D-ribosyl)imidazole-4-carboxamide + L-glutamate + H(+). It carries out the reaction L-glutamine + H2O = L-glutamate + NH4(+). It participates in amino-acid biosynthesis; L-histidine biosynthesis; L-histidine from 5-phospho-alpha-D-ribose 1-diphosphate: step 5/9. Its function is as follows. IGPS catalyzes the conversion of PRFAR and glutamine to IGP, AICAR and glutamate. The HisH subunit catalyzes the hydrolysis of glutamine to glutamate and ammonia as part of the synthesis of IGP and AICAR. The resulting ammonia molecule is channeled to the active site of HisF. The polypeptide is Imidazole glycerol phosphate synthase subunit HisH (Listeria monocytogenes serovar 1/2a (strain ATCC BAA-679 / EGD-e)).